Reading from the N-terminus, the 316-residue chain is Probable cell division protein WhiA (316 aa).

A DNA-binding region (H-T-H motif) is located at residues 276–309 (SLEELGKIAEPQITKDAIAGRIRRLLQLAEKTEK).

It belongs to the WhiA family.

Functionally, involved in cell division and chromosome segregation. The protein is Probable cell division protein WhiA of Bifidobacterium longum subsp. infantis (strain ATCC 15697 / DSM 20088 / JCM 1222 / NCTC 11817 / S12).